The primary structure comprises 103 residues: UPF0145 protein CYA_2258 (103 aa).

The protein belongs to the UPF0145 family.

The protein is UPF0145 protein CYA_2258 of Synechococcus sp. (strain JA-3-3Ab) (Cyanobacteria bacterium Yellowstone A-Prime).